We begin with the raw amino-acid sequence, 367 residues long: Phosphoribosylaminoimidazole-succinocarboxamide synthase (367 aa).

It belongs to the SAICAR synthetase family.

The catalysed reaction is 5-amino-1-(5-phospho-D-ribosyl)imidazole-4-carboxylate + L-aspartate + ATP = (2S)-2-[5-amino-1-(5-phospho-beta-D-ribosyl)imidazole-4-carboxamido]succinate + ADP + phosphate + 2 H(+). It functions in the pathway purine metabolism; IMP biosynthesis via de novo pathway; 5-amino-1-(5-phospho-D-ribosyl)imidazole-4-carboxamide from 5-amino-1-(5-phospho-D-ribosyl)imidazole-4-carboxylate: step 1/2. In Shewanella baltica (strain OS223), this protein is Phosphoribosylaminoimidazole-succinocarboxamide synthase.